Consider the following 595-residue polypeptide: Tectonic-3 (595 aa).

The signal sequence occupies residues 1–22 (MCTLQLHLLLLVVLMLSETARP). The tract at residues 23-62 (QPSSTARAFPTSWGLEPVTPEVPTSAPPDSSESPTPWTLS) is disordered. The Extracellular segment spans residues 23–575 (QPSSTARAFP…ALSRGASVQK (553 aa)). Positions 49–62 (PPDSSESPTPWTLS) are enriched in polar residues. Residues asparagine 167 and asparagine 336 are each glycosylated (N-linked (GlcNAc...) asparagine). Residues 576–594 (DSLVLILCVLLLGLLNSQT) form a helical membrane-spanning segment. A topological domain (cytoplasmic) is located at residue lysine 595.

The protein belongs to the tectonic family. Part of the tectonic-like complex (also named B9 complex).

It is found in the membrane. In terms of biological role, part of the tectonic-like complex which is required for tissue-specific ciliogenesis and may regulate ciliary membrane composition. May be involved in apoptosis regulation. Necessary for signal transduction through the sonic hedgehog (Shh) signaling pathway. The protein is Tectonic-3 (Tctn3) of Mus musculus (Mouse).